The chain runs to 160 residues: Thy-1 membrane glycoprotein (160 aa).

The first 19 residues, 1–19, serve as a signal peptide directing secretion; it reads MNPTVSIAVILTVLQAAHC. Gln20 bears the Pyrrolidone carboxylic acid mark. Residues 20-120 enclose the Ig-like V-type domain; it reads QMIRDLSACL…YTGNQIKNIT (101 aa). 2 disulfides stabilise this stretch: Cys28/Cys129 and Cys38/Cys103. Asn42, Asn78, and Asn118 each carry an N-linked (GlcNAc...) asparagine glycan. Residue Cys129 is the site of GPI-anchor amidated cysteine attachment. Positions 130-160 are cleaved as a propeptide — removed in mature form; sequence VRLSLLIQNTSWLLLLLLSLPLLQAVDFVSL. N-linked (GlcNAc...) asparagine glycosylation is present at Asn138.

The N-terminus is blocked. As to expression, forebrain, cerebellum and tectum.

Its subcellular location is the cell membrane. In terms of biological role, may play a role in cell-cell or cell-ligand interactions during synaptogenesis and other events in the brain. The sequence is that of Thy-1 membrane glycoprotein (THY1) from Gallus gallus (Chicken).